Reading from the N-terminus, the 399-residue chain is Elongation factor Tu (399 aa).

Positions 10–209 (KPHVNIGTIG…AVDDYIPTPV (200 aa)) constitute a tr-type G domain. The interval 19–26 (GHVDHGKT) is G1. 19-26 (GHVDHGKT) serves as a coordination point for GTP. T26 serves as a coordination point for Mg(2+). Positions 62 to 66 (GITIN) are G2. Residues 83–86 (DCPG) form a G3 region. Residues 83–87 (DCPGH) and 138–141 (NKCD) contribute to the GTP site. A G4 region spans residues 138 to 141 (NKCD). The segment at 175–177 (SAY) is G5.

This sequence belongs to the TRAFAC class translation factor GTPase superfamily. Classic translation factor GTPase family. EF-Tu/EF-1A subfamily. As to quaternary structure, monomer.

It is found in the cytoplasm. The enzyme catalyses GTP + H2O = GDP + phosphate + H(+). In terms of biological role, GTP hydrolase that promotes the GTP-dependent binding of aminoacyl-tRNA to the A-site of ribosomes during protein biosynthesis. The sequence is that of Elongation factor Tu from Bifidobacterium longum subsp. infantis (strain ATCC 15697 / DSM 20088 / JCM 1222 / NCTC 11817 / S12).